Consider the following 321-residue polypeptide: Replication factor C small subunit (321 aa).

Residue 46–53 (GPAGVGKT) coordinates ATP.

It belongs to the activator 1 small subunits family. RfcS subfamily. Heterohexamer composed of four small subunits (RfcS) and two large subunits (RfcL).

Functionally, part of the RFC clamp loader complex which loads the PCNA sliding clamp onto DNA. The complex possesses DNA-dependent ATPase activity which is further stimulated by PCNA. In conjunction with PCNA stimulates DNA synthesis by PolB, relieving inhibition by replication protein A (RPA). The chain is Replication factor C small subunit (rfcS) from Methanothermobacter thermautotrophicus (strain ATCC 29096 / DSM 1053 / JCM 10044 / NBRC 100330 / Delta H) (Methanobacterium thermoautotrophicum).